The sequence spans 371 residues: N-acetyldiaminopimelate deacetylase (371 aa).

Residue Asp-68 is part of the active site. Glu-127 acts as the Proton acceptor in catalysis.

The protein belongs to the peptidase M20A family. N-acetyldiaminopimelate deacetylase subfamily.

It catalyses the reaction N-acetyl-(2S,6S)-2,6-diaminopimelate + H2O = (2S,6S)-2,6-diaminopimelate + acetate. It participates in amino-acid biosynthesis; L-lysine biosynthesis via DAP pathway; LL-2,6-diaminopimelate from (S)-tetrahydrodipicolinate (acetylase route): step 3/3. In terms of biological role, catalyzes the conversion of N-acetyl-diaminopimelate to diaminopimelate and acetate. The chain is N-acetyldiaminopimelate deacetylase from Listeria monocytogenes serotype 4b (strain CLIP80459).